We begin with the raw amino-acid sequence, 212 residues long: MALYGLRQLDHRNAYASNGSYKPYLINNLSYLHDSSFVPVYKGCGTTDMGQHFTSEYPPYVGWVTRDATTMDASAGVRLCLDTPPMTSGANRTLFDARYKQWYPDYTHLPGQIQYYMRPEMTRPFAPPLWSADTTALAGIRIDSMDNVHYDFYRANGQNGCPAQPERCGECFIRELRDVQDHREDILASHTARLNRNKYEPIWFNWTSQYLR.

This sequence belongs to the IIV-6 309L family.

This is an uncharacterized protein from Aedes vexans (Inland floodwater mosquito).